A 77-amino-acid chain; its full sequence is Distinctin-like peptide (77 aa).

Residues Leu1–Cys19 form the signal peptide. Residues Glu20 to Glu39 constitute a propeptide that is removed on maturation.

The protein belongs to the frog skin active peptide (FSAP) family. As to expression, expressed by the skin glands.

It is found in the secreted. Has antimicrobial activity. The chain is Distinctin-like peptide from Pithecopus azureus (Orange-legged monkey tree frog).